The chain runs to 216 residues: Sporamin B (216 aa).

The N-terminal stretch at 1–21 (MKALALLFVLSLYLLPNPAHS) is a signal peptide.

The protein belongs to the protease inhibitor I3 (leguminous Kunitz-type inhibitor) family. Accumulates specifically in tuberous roots and tubers upon tuberization. Sporamin accounts 60 to 80% of the total soluble protein of the organ.

It is found in the vacuole. Functionally, major tuberous root protein. The sequence is that of Sporamin B (GSPO-B1) from Ipomoea batatas (Sweet potato).